We begin with the raw amino-acid sequence, 429 residues long: S-adenosylmethionine synthase (429 aa).

His-14 serves as a coordination point for ATP. Residue Asp-16 coordinates Mg(2+). Position 42 (Glu-42) interacts with K(+). 2 residues coordinate L-methionine: Glu-55 and Gln-98. Residues 98–108 (QSADINRGVDR) form a flexible loop region. Residues 165 to 167 (DAK), 252 to 253 (KF), Asp-261, 267 to 268 (RK), Ala-284, and Lys-288 each bind ATP. Asp-261 lines the L-methionine pocket. Lys-292 is a binding site for L-methionine.

This sequence belongs to the AdoMet synthase family. As to quaternary structure, homotetramer; dimer of dimers. It depends on Mg(2+) as a cofactor. K(+) is required as a cofactor.

Its subcellular location is the cytoplasm. The enzyme catalyses L-methionine + ATP + H2O = S-adenosyl-L-methionine + phosphate + diphosphate. The protein operates within amino-acid biosynthesis; S-adenosyl-L-methionine biosynthesis; S-adenosyl-L-methionine from L-methionine: step 1/1. In terms of biological role, catalyzes the formation of S-adenosylmethionine (AdoMet) from methionine and ATP. The overall synthetic reaction is composed of two sequential steps, AdoMet formation and the subsequent tripolyphosphate hydrolysis which occurs prior to release of AdoMet from the enzyme. The polypeptide is S-adenosylmethionine synthase (Porphyromonas gingivalis (strain ATCC BAA-308 / W83)).